The primary structure comprises 334 residues: ABC transporter L-arabinose-binding periplasmic protein (334 aa).

A signal peptide spans 1–30 (MNRTIRRHTLRALLAALCIAPLGMQGAARA).

This sequence belongs to the bacterial solute-binding protein 2 family. The complex is composed of two ATP-binding proteins (AraG), two transmembrane proteins (AraH) and a solute-binding protein (AraF).

It localises to the periplasm. Functionally, part of the ABC transporter complex AraFGH involved in L-arabinose import. Binds with high affinity to L-arabinose. The chain is ABC transporter L-arabinose-binding periplasmic protein (araF) from Azospirillum brasilense.